Reading from the N-terminus, the 124-residue chain is uncharacterized protein (124 aa).

This is an uncharacterized protein from Schizosaccharomyces pombe (strain 972 / ATCC 24843) (Fission yeast).